A 677-amino-acid polypeptide reads, in one-letter code: UvrABC system protein B (677 aa).

Residues 24–412 (EGVLEGVPAQ…EGIVVEQVIR (389 aa)) enclose the Helicase ATP-binding domain. 37–44 (GVTGSGKT) contacts ATP. Residues 90-113 (YYDYYQPEAYLPSSDTYIEKDLAI) carry the Beta-hairpin motif. The Helicase C-terminal domain occupies 429-591 (QIDDLMEEIQ…ITPQQIKKAR (163 aa)). One can recognise a UVR domain in the interval 635–670 (EKSMERTRKLMQEAAKKLEFIEAAQYRDELLKMEDL).

The protein belongs to the UvrB family. In terms of assembly, forms a heterotetramer with UvrA during the search for lesions. Interacts with UvrC in an incision complex.

It is found in the cytoplasm. Its function is as follows. The UvrABC repair system catalyzes the recognition and processing of DNA lesions. A damage recognition complex composed of 2 UvrA and 2 UvrB subunits scans DNA for abnormalities. Upon binding of the UvrA(2)B(2) complex to a putative damaged site, the DNA wraps around one UvrB monomer. DNA wrap is dependent on ATP binding by UvrB and probably causes local melting of the DNA helix, facilitating insertion of UvrB beta-hairpin between the DNA strands. Then UvrB probes one DNA strand for the presence of a lesion. If a lesion is found the UvrA subunits dissociate and the UvrB-DNA preincision complex is formed. This complex is subsequently bound by UvrC and the second UvrB is released. If no lesion is found, the DNA wraps around the other UvrB subunit that will check the other stand for damage. This Bacteroides fragilis (strain YCH46) protein is UvrABC system protein B.